The following is a 1072-amino-acid chain: Dyslexia-associated protein KIAA0319 (1072 aa).

Positions 1–20 (MAPPTGVLSSLLLLVTIAGC) are cleaved as a signal peptide. The MANSC domain maps to 21 to 99 (ARKQCSEGRT…PKKMGPIRSY (79 aa)). The Extracellular portion of the chain corresponds to 21 to 955 (ARKQCSEGRT…WDGESNCEWS (935 aa)). Disordered stretches follow at residues 168–277 (LQPS…SLPP) and 295–327 (VTPGSTEHSIPTPPTSAAPSESTPSELPISPTT). Asparagine 196, asparagine 219, and asparagine 262 each carry an N-linked (GlcNAc...) asparagine glycan. The span at 254–265 (SQLQEQSSNSSG) shows a compositional bias: polar residues. A compositionally biased stretch (low complexity) spans 311–320 (AAPSESTPSE). PKD domains are found at residues 341 to 427 (DNLI…VKPA), 435 to 524 (VAVV…VNNA), 530 to 620 (VANA…VQPE), 621 to 714 (NNRP…VKKE), and 720 to 811 (RARA…VQPD). Asparagine 394, asparagine 421, asparagine 498, asparagine 513, asparagine 536, and asparagine 551 each carry an N-linked (GlcNAc...) asparagine glycan. Asparagine 733 is a glycosylation site (N-linked (GlcNAc...) asparagine). Residues 956–976 (IFYVTVLAFTLIVLTGGFTWL) traverse the membrane as a helical segment. Topologically, residues 977-1072 (CICCCKRQKR…ASFSYCSKDR (96 aa)) are cytoplasmic. The Endocytosis signal motif lies at 995 to 998 (YTIL). Residues 1045–1072 (KMERGNPKVSMNGSIRNGASFSYCSKDR) are disordered. Residues 1053–1072 (VSMNGSIRNGASFSYCSKDR) are compositionally biased toward polar residues.

Homodimer. Interacts with AP2M1; required for clathrin-mediated endocytosis. Post-translationally, N-glycosylated. O-glycosylated. In terms of processing, shedding of the extracellular domain and intramembrane cleavage produce several proteolytic products. The intramembrane cleavage releases a soluble cytoplasmic polypeptide that translocates to the nucleolus. As to expression, detected in adult brain cortex and fetal frontal lobe (at protein level). Highly expressed in brain cortex, putamen, amygdala, hippocampus and cerebellum.

The protein resides in the cell membrane. It localises to the early endosome membrane. In terms of biological role, involved in neuronal migration during development of the cerebral neocortex. May function in a cell autonomous and a non-cell autonomous manner and play a role in appropriate adhesion between migrating neurons and radial glial fibers. May also regulate growth and differentiation of dendrites. This chain is Dyslexia-associated protein KIAA0319 (KIAA0319), found in Homo sapiens (Human).